A 368-amino-acid chain; its full sequence is Glutamate 5-kinase 1 (368 aa).

Residue K12 participates in ATP binding. Positions 52, 135, and 147 each coordinate substrate. ATP-binding positions include 167–168 (SD) and 209–215 (TGGMKTK). Positions 274-348 (QGEVVVDGSF…DNEQSEFSEK (75 aa)) constitute a PUA domain.

It belongs to the glutamate 5-kinase family.

It is found in the cytoplasm. It catalyses the reaction L-glutamate + ATP = L-glutamyl 5-phosphate + ADP. The protein operates within amino-acid biosynthesis; L-proline biosynthesis; L-glutamate 5-semialdehyde from L-glutamate: step 1/2. In terms of biological role, catalyzes the transfer of a phosphate group to glutamate to form L-glutamate 5-phosphate. The chain is Glutamate 5-kinase 1 from Pseudoalteromonas translucida (strain TAC 125).